The chain runs to 138 residues: Thyrotropin subunit beta (138 aa).

The first 20 residues, 1 to 20 (MTAIYLMSMLFGLACGQAMS), serve as a signal peptide directing secretion. 6 disulfide bridges follow: Cys22–Cys72, Cys36–Cys87, Cys39–Cys125, Cys47–Cys103, Cys51–Cys105, and Cys108–Cys115. A glycan (N-linked (GlcNAc...) asparagine) is linked at Asn43. Residues 133-138 (VVGFSI) constitute a propeptide that is removed on maturation.

The protein belongs to the glycoprotein hormones subunit beta family. In terms of assembly, heterodimer of a common alpha chain and a unique beta chain which confers biological specificity to thyrotropin, lutropin, follitropin and gonadotropin.

Its subcellular location is the secreted. Functionally, indispensable for the control of thyroid structure and metabolism. This is Thyrotropin subunit beta (TSHB) from Canis lupus familiaris (Dog).